The chain runs to 485 residues: Rhamnulokinase (485 aa).

ATP is bound at residue 10 to 14; sequence ASSGR. Substrate is bound by residues Ala-78 and 233–235; that span reads HDT. The Proton acceptor role is filled by Asp-234. Thr-256 lines the ATP pocket. Asn-293 contacts substrate. Gln-301 is an ATP binding site. A disulfide bridge links Cys-351 with Cys-368. Gly-400 is a binding site for ATP.

It belongs to the rhamnulokinase family. Requires Mg(2+) as cofactor.

The enzyme catalyses L-rhamnulose + ATP = L-rhamnulose 1-phosphate + ADP + H(+). It participates in carbohydrate degradation; L-rhamnose degradation; glycerone phosphate from L-rhamnose: step 2/3. Involved in the catabolism of L-rhamnose (6-deoxy-L-mannose). Catalyzes the transfer of the gamma-phosphate group from ATP to the 1-hydroxyl group of L-rhamnulose to yield L-rhamnulose 1-phosphate. The polypeptide is Rhamnulokinase (Bacillus subtilis (strain 168)).